The primary structure comprises 576 residues: Proline--tRNA ligase (576 aa).

The protein belongs to the class-II aminoacyl-tRNA synthetase family. ProS type 1 subfamily. In terms of assembly, homodimer.

The protein localises to the cytoplasm. It carries out the reaction tRNA(Pro) + L-proline + ATP = L-prolyl-tRNA(Pro) + AMP + diphosphate. Functionally, catalyzes the attachment of proline to tRNA(Pro) in a two-step reaction: proline is first activated by ATP to form Pro-AMP and then transferred to the acceptor end of tRNA(Pro). As ProRS can inadvertently accommodate and process non-cognate amino acids such as alanine and cysteine, to avoid such errors it has two additional distinct editing activities against alanine. One activity is designated as 'pretransfer' editing and involves the tRNA(Pro)-independent hydrolysis of activated Ala-AMP. The other activity is designated 'posttransfer' editing and involves deacylation of mischarged Ala-tRNA(Pro). The misacylated Cys-tRNA(Pro) is not edited by ProRS. The protein is Proline--tRNA ligase of Pelobacter propionicus (strain DSM 2379 / NBRC 103807 / OttBd1).